A 239-amino-acid polypeptide reads, in one-letter code: uncharacterized protein (239 aa).

This is an uncharacterized protein from Edwardsiella ictaluri (strain 93-146).